The following is a 290-amino-acid chain: uncharacterized protein (290 aa).

Positions 1–25 are cleaved as a signal peptide; the sequence is MNKKSILSKTSLGSLFFLFGTALSA. C26 carries the N-palmitoyl cysteine lipid modification. C26 carries S-diacylglycerol cysteine lipidation. A disordered region spans residues 183 to 203; it reads GTDSKGSGSNNQNGGVTEKDF. Over residues 186-197 the composition is skewed to low complexity; that stretch reads SKGSGSNNQNGG.

The protein belongs to the MG439/MG440 family.

The protein resides in the cell membrane. This is an uncharacterized protein from Mycoplasma pneumoniae (strain ATCC 29342 / M129 / Subtype 1) (Mycoplasmoides pneumoniae).